We begin with the raw amino-acid sequence, 469 residues long: E3 ubiquitin-protein ligase pellino homolog 3 (469 aa).

The disordered stretch occupies residues 1-39 (MVLEGNPEVGSPRTSDLQHRGNKGSCVLSSPGEDAQPGE). A Phosphoserine modification is found at Ser11.

Belongs to the pellino family. As to quaternary structure, interacts with TRAF6, MAP3K14 and MAP3K7. Phosphorylated by IRAK1 enhancing its E3 ligase activity. Highly expressed in brain, heart and testis, and at lower level in kidney, liver, lung, placenta, small intestine, spleen and stomach. Isoform 1 is not expressed in lung.

The catalysed reaction is S-ubiquitinyl-[E2 ubiquitin-conjugating enzyme]-L-cysteine + [acceptor protein]-L-lysine = [E2 ubiquitin-conjugating enzyme]-L-cysteine + N(6)-ubiquitinyl-[acceptor protein]-L-lysine.. It participates in protein modification; protein ubiquitination. Its function is as follows. E3 ubiquitin ligase catalyzing the covalent attachment of ubiquitin moieties onto substrate proteins. Involved in the TLR and IL-1 signaling pathways via interaction with the complex containing IRAK kinases and TRAF6. Mediates 'Lys-63'-linked polyubiquitination of IRAK1. Can activate AP1/JUN and ELK1. Acts as a regulator of innate immunity by mediating 'Lys-63'-linked polyubiquitination of RIPK2 downstream of NOD1 and NOD2, thereby transforming RIPK2 into a scaffolding protein for downstream effectors, ultimately leading to activation of the NF-kappa-B and MAP kinases signaling. Catalyzes 'Lys-63'-linked polyubiquitination of RIPK2 in parallel of XIAP. The polypeptide is E3 ubiquitin-protein ligase pellino homolog 3 (Homo sapiens (Human)).